Reading from the N-terminus, the 211-residue chain is ATP phosphoribosyltransferase (211 aa).

Belongs to the ATP phosphoribosyltransferase family. Short subfamily. In terms of assembly, heteromultimer composed of HisG and HisZ subunits.

The protein localises to the cytoplasm. The catalysed reaction is 1-(5-phospho-beta-D-ribosyl)-ATP + diphosphate = 5-phospho-alpha-D-ribose 1-diphosphate + ATP. Its pathway is amino-acid biosynthesis; L-histidine biosynthesis; L-histidine from 5-phospho-alpha-D-ribose 1-diphosphate: step 1/9. Catalyzes the condensation of ATP and 5-phosphoribose 1-diphosphate to form N'-(5'-phosphoribosyl)-ATP (PR-ATP). Has a crucial role in the pathway because the rate of histidine biosynthesis seems to be controlled primarily by regulation of HisG enzymatic activity. The chain is ATP phosphoribosyltransferase from Pseudomonas paraeruginosa (strain DSM 24068 / PA7) (Pseudomonas aeruginosa (strain PA7)).